A 1034-amino-acid polypeptide reads, in one-letter code: Protein ITPRID1 (1034 aa).

Disordered regions lie at residues 223–290 (KTQQ…PTKP), 442–486 (QVSS…KSMT), and 624–678 (QSSL…SSWS). Composition is skewed to polar residues over residues 443–453 (VSSMTGSQSPT) and 465–476 (HSPASQQDSLQE). A compositionally biased stretch (low complexity) spans 477-486 (SYGSKSKSMT). Residues 669–678 (TDSNAASSWS) are compositionally biased toward polar residues. A coiled-coil region spans residues 843–902 (EMETMKMVCQSFREHLEEIEQHFMGQQALYPRDMSEEEREEAEYLRTLREALRQQVAELA).

The polypeptide is Protein ITPRID1 (Itprid1) (Mus musculus (Mouse)).